The primary structure comprises 336 residues: MTKIAVLGGGSWGTALANVAAENNNDVRLWTRTATQADEINSQHTNQKYLPDAKLSSELMATSNMALAVMDAEIVLTVVPTKVVREVARQLADVLNKQDHQVILAHATKGLEQVTYKRVSEMLAEEVPAKYRSTLAMISGPSHAEDVIKHDLTSVSIASENEEAAKLLQQVFANSSFRPYTNHDLLGSELAAALKNIIAIGSGALIGLGYGANAQAALLTRGLSEMRALGQAMGAQPETFLGLAGIGDLIVTGMSPNSRNYRAGKQLGEGKSLQEIQDDMGMVIEGVSTTKAVYEFSQHHHVEMPITAGIYRILYENEPLRDVISDLMSRPLRSED.

Ser11, Trp12, Arg32, and Lys109 together coordinate NADPH. Sn-glycerol 3-phosphate is bound by residues Lys109, Gly140, and Ser142. Residue Ala144 participates in NADPH binding. Sn-glycerol 3-phosphate contacts are provided by Lys195, Asp248, Ser258, Arg259, and Asn260. Lys195 acts as the Proton acceptor in catalysis. Arg259 provides a ligand contact to NADPH. Val283 and Glu285 together coordinate NADPH.

It belongs to the NAD-dependent glycerol-3-phosphate dehydrogenase family.

The protein resides in the cytoplasm. The catalysed reaction is sn-glycerol 3-phosphate + NAD(+) = dihydroxyacetone phosphate + NADH + H(+). The enzyme catalyses sn-glycerol 3-phosphate + NADP(+) = dihydroxyacetone phosphate + NADPH + H(+). It functions in the pathway membrane lipid metabolism; glycerophospholipid metabolism. Functionally, catalyzes the reduction of the glycolytic intermediate dihydroxyacetone phosphate (DHAP) to sn-glycerol 3-phosphate (G3P), the key precursor for phospholipid synthesis. The protein is Glycerol-3-phosphate dehydrogenase [NAD(P)+] of Leuconostoc mesenteroides subsp. mesenteroides (strain ATCC 8293 / DSM 20343 / BCRC 11652 / CCM 1803 / JCM 6124 / NCDO 523 / NBRC 100496 / NCIMB 8023 / NCTC 12954 / NRRL B-1118 / 37Y).